Reading from the N-terminus, the 422-residue chain is Probable metallocarboxypeptidase A (422 aa).

The signal sequence occupies residues 1-17 (MRSVLSLALLAVNVVTA). Residues 18–112 (AVVAPFDYSG…FEAYSAGYAP (95 aa)) constitute a propeptide, activation peptide. The 301-residue stretch at 119–419 (SYHSYQDHLS…AGTVAMLKAV (301 aa)) folds into the Peptidase M14 domain. Residues His-179 and Glu-182 each contribute to the Zn(2+) site. Substrate contacts are provided by residues 179 to 182 (HARE), Arg-237, and 254 to 255 (NR). A disulfide bridge links Cys-248 with Cys-271. His-309 provides a ligand contact to Zn(2+). 310 to 311 (SY) contributes to the substrate binding site. Glu-385 (proton donor/acceptor) is an active-site residue.

Belongs to the peptidase M14 family. It depends on Zn(2+) as a cofactor.

Its subcellular location is the secreted. Its function is as follows. Extracellular metalloprotease that contributes to pathogenicity. This Trichophyton verrucosum (strain HKI 0517) protein is Probable metallocarboxypeptidase A (MCPA).